We begin with the raw amino-acid sequence, 532 residues long: Cilia- and flagella-associated protein 97 (532 aa).

A Phosphoserine modification is found at serine 19. Disordered stretches follow at residues 28-83 (ETNS…PVEN), 116-263 (IPNR…TPDI), 306-333 (KAAK…SLDH), 398-421 (LSRQ…PPKL), and 485-532 (GQYS…TAWL). Residues 35–49 (KQNDDPKERIDKDTK) show a composition bias toward basic and acidic residues. Residues 50–63 (NVNSNTGMQTTENY) are compositionally biased toward polar residues. Residues 67-82 (KGNERNVKFPPEHPVE) show a composition bias toward basic and acidic residues. The span at 127 to 139 (GEDDYYTDGEESS) shows a compositional bias: acidic residues. Threonine 133 is modified (phosphothreonine). Phosphoserine is present on residues serine 138 and serine 139. Composition is skewed to low complexity over residues 170–185 (SSSS…SGSG) and 194–205 (DSHLSDSSPSSK). Position 218 is a phosphoserine (serine 218). Residues 227–239 (IKSTETQPSSTTP) show a composition bias toward polar residues. Position 248 is a phosphoserine (serine 248). A compositionally biased stretch (polar residues) spans 253 to 263 (TDVSPLSTPDI). The span at 320–329 (SSKSSSVLDS) shows a compositional bias: low complexity. A Phosphoserine modification is found at serine 330. Residues 374–450 (GKNYSFTREE…ALLKRLEAVK (77 aa)) are a coiled coil. Over residues 493–503 (SRTSSATSGLS) the composition is skewed to polar residues.

Belongs to the CFAP97 family.

This is Cilia- and flagella-associated protein 97 from Homo sapiens (Human).